The following is a 155-amino-acid chain: 6,7-dimethyl-8-ribityllumazine synthase (155 aa).

5-amino-6-(D-ribitylamino)uracil contacts are provided by residues F23, 57-59 (AFE), and 81-83 (AVI). (2S)-2-hydroxy-3-oxobutyl phosphate is bound at residue 86 to 87 (ST). H89 functions as the Proton donor in the catalytic mechanism. F114 contacts 5-amino-6-(D-ribitylamino)uracil. R128 serves as a coordination point for (2S)-2-hydroxy-3-oxobutyl phosphate.

Belongs to the DMRL synthase family.

It carries out the reaction (2S)-2-hydroxy-3-oxobutyl phosphate + 5-amino-6-(D-ribitylamino)uracil = 6,7-dimethyl-8-(1-D-ribityl)lumazine + phosphate + 2 H2O + H(+). It participates in cofactor biosynthesis; riboflavin biosynthesis; riboflavin from 2-hydroxy-3-oxobutyl phosphate and 5-amino-6-(D-ribitylamino)uracil: step 1/2. In terms of biological role, catalyzes the formation of 6,7-dimethyl-8-ribityllumazine by condensation of 5-amino-6-(D-ribitylamino)uracil with 3,4-dihydroxy-2-butanone 4-phosphate. This is the penultimate step in the biosynthesis of riboflavin. The chain is 6,7-dimethyl-8-ribityllumazine synthase from Citrifermentans bemidjiense (strain ATCC BAA-1014 / DSM 16622 / JCM 12645 / Bem) (Geobacter bemidjiensis).